A 329-amino-acid chain; its full sequence is DNA-directed RNA polymerase subunit alpha (329 aa).

Residues 1-234 (MSGSVTEFLK…EQLDAFVELR (234 aa)) are alpha N-terminal domain (alpha-NTD). The interval 248 to 329 (FDPILLRPVD…WPPESIAEKD (82 aa)) is alpha C-terminal domain (alpha-CTD).

It belongs to the RNA polymerase alpha chain family. Homodimer. The RNAP catalytic core consists of 2 alpha, 1 beta, 1 beta' and 1 omega subunit. When a sigma factor is associated with the core the holoenzyme is formed, which can initiate transcription.

It carries out the reaction RNA(n) + a ribonucleoside 5'-triphosphate = RNA(n+1) + diphosphate. DNA-dependent RNA polymerase catalyzes the transcription of DNA into RNA using the four ribonucleoside triphosphates as substrates. This is DNA-directed RNA polymerase subunit alpha from Pseudoalteromonas atlantica (strain T6c / ATCC BAA-1087).